Consider the following 120-residue polypeptide: Large ribosomal subunit protein eL18 (120 aa).

Belongs to the eukaryotic ribosomal protein eL18 family.

The protein is Large ribosomal subunit protein eL18 of Thermoplasma acidophilum (strain ATCC 25905 / DSM 1728 / JCM 9062 / NBRC 15155 / AMRC-C165).